A 149-amino-acid polypeptide reads, in one-letter code: Deoxyuridine 5'-triphosphate nucleotidohydrolase (149 aa).

Residues 68-70 (RSG), asparagine 81, and 85-87 (LID) contribute to the substrate site.

It belongs to the dUTPase family. The cofactor is Mg(2+).

The enzyme catalyses dUTP + H2O = dUMP + diphosphate + H(+). Its pathway is pyrimidine metabolism; dUMP biosynthesis; dUMP from dCTP (dUTP route): step 2/2. This enzyme is involved in nucleotide metabolism: it produces dUMP, the immediate precursor of thymidine nucleotides and it decreases the intracellular concentration of dUTP so that uracil cannot be incorporated into DNA. This chain is Deoxyuridine 5'-triphosphate nucleotidohydrolase, found in Laribacter hongkongensis (strain HLHK9).